Consider the following 671-residue polypeptide: DNA ligase (671 aa).

NAD(+) is bound by residues 32–36, 81–82, and E114; these read DVEYD and SL. K116 serves as the catalytic N6-AMP-lysine intermediate. NAD(+) is bound by residues R137, E175, K292, and K316. Zn(2+) contacts are provided by C410, C413, C428, and C434. Residues 592 to 671 enclose the BRCT domain; it reads EKNNYFSGKN…AEFYQILGIR (80 aa).

Belongs to the NAD-dependent DNA ligase family. LigA subfamily. Mg(2+) is required as a cofactor. Requires Mn(2+) as cofactor.

It catalyses the reaction NAD(+) + (deoxyribonucleotide)n-3'-hydroxyl + 5'-phospho-(deoxyribonucleotide)m = (deoxyribonucleotide)n+m + AMP + beta-nicotinamide D-nucleotide.. Its function is as follows. DNA ligase that catalyzes the formation of phosphodiester linkages between 5'-phosphoryl and 3'-hydroxyl groups in double-stranded DNA using NAD as a coenzyme and as the energy source for the reaction. It is essential for DNA replication and repair of damaged DNA. This is DNA ligase from Baumannia cicadellinicola subsp. Homalodisca coagulata.